Reading from the N-terminus, the 53-residue chain is UPF0391 membrane protein Meso_3392 (53 aa).

The next 2 helical transmembrane spans lie at 4 to 24 (WILILLIVAAVAGLLGMHSLA) and 33 to 53 (ILIAIVLILFLLAVLGIIAIA).

Belongs to the UPF0391 family.

The protein localises to the cell membrane. This chain is UPF0391 membrane protein Meso_3392, found in Chelativorans sp. (strain BNC1).